The following is a 269-amino-acid chain: Xyloglucan endotransglucosylase/hydrolase protein 24 (269 aa).

The signal sequence occupies residues 1–21 (MSPFKIFFFTTLLVAAFSVSA). Residues 22–212 (ADFNTDVNVA…WSKAPFMASY (191 aa)) form the GH16 domain. The active-site Nucleophile is Glu-98. The active-site Proton donor is Glu-102. A xyloglucan-binding site is contributed by Glu-102. The N-linked (GlcNAc...) asparagine glycan is linked to Asn-106. Xyloglucan contacts are provided by residues 115–117 (HTN), 125–127 (DKE), 191–192 (DW), Gly-196, and Arg-256. The cysteines at positions 251 and 265 are disulfide-linked.

This sequence belongs to the glycosyl hydrolase 16 family. XTH group 2 subfamily. Contains at least one intrachain disulfide bond essential for its enzymatic activity. Post-translationally, N-glycosylated; essential for its enzymatic activity. As to expression, highly expressed. Predominantly expressed in stems. Expressed in shoot apical meristems, also found in seedlings and meristems.

It localises to the secreted. It is found in the cell wall. The protein resides in the extracellular space. Its subcellular location is the apoplast. It catalyses the reaction breaks a beta-(1-&gt;4) bond in the backbone of a xyloglucan and transfers the xyloglucanyl segment on to O-4 of the non-reducing terminal glucose residue of an acceptor, which can be a xyloglucan or an oligosaccharide of xyloglucan.. Its function is as follows. Catalyzes xyloglucan endohydrolysis (XEH) and/or endotransglycosylation (XET). Cleaves and religates xyloglucan polymers, an essential constituent of the primary cell wall, and thereby participates in cell wall construction of growing tissues. May be required during development to modify the walls of cells under mechanical stress. The sequence is that of Xyloglucan endotransglucosylase/hydrolase protein 24 (XTH24) from Arabidopsis thaliana (Mouse-ear cress).